A 637-amino-acid chain; its full sequence is CREB-regulated transcription coactivator 3 (637 aa).

At Ser66 the chain carries Phosphoserine. Positions 105–115 are enriched in basic residues; sequence NRLHSSHHRPI. 2 disordered regions span residues 105–184 and 269–288; these read NRLH…SLQD and HFPS…YANI. Residue Ser133 is modified to Phosphoserine. Thr143 bears the Phosphothreonine mark. Ser145 bears the Phosphoserine; by SIK2 mark. The segment covering 145-159 has biased composition (polar residues); the sequence is SDSALHTSASSTKSQ. A Phosphothreonine modification is found at Thr151. Ser293 is modified (phosphoserine). A disordered region spans residues 299–462; it reads AMTHLGISGS…QNYQPPSPVP (164 aa). Residues 309–337 are compositionally biased toward polar residues; that stretch reads PGMQNTRSNPSIQATMNNNSLASNVNSHT. Residues 344 to 365 show a composition bias toward low complexity; it reads PALHPSLRLSSLSNPSLPTSAL. Phosphoserine occurs at positions 377 and 396. Over residues 377–395 the composition is skewed to polar residues; that stretch reads SPLTLTPGSESNRSISNQF. A compositionally biased stretch (low complexity) spans 396–407; sequence SPTSPMNMPPNS. Residues 418-429 are compositionally biased toward pro residues; it reads SLPPLEPPPPYP. The segment covering 430-447 has biased composition (low complexity); that stretch reads LYSDQPQPHLHHTQQQMH. A Phosphoserine modification is found at Ser561. The disordered stretch occupies residues 615 to 637; the sequence is MLSDPDMVLPDPSIEDSFRSDKL.

The protein belongs to the TORC family. In terms of assembly, binding, as a tetramer, through its N-terminal region, with the bZIP domain of creb1 enhances recruitment of taf4 to the promoter. 'Arg-300' in the bZIP domain of creb1 is essential for this interaction.

It localises to the nucleus. It is found in the cytoplasm. In terms of biological role, transcriptional coactivator for creb1 which activates transcription through both consensus and variant cAMP response element (CRE) sites. Acts as a coactivator, in the SIK/TORC signaling pathway, being active when dephosphorylated and acts independently of creb1 'Ser-119' phosphorylation. Enhances the interaction of creb1 with taf4. Regulates the expression of specific CREB-activated genes such as the steroidogenic gene, StAR. Potent coactivator of ppargc1a and inducer of mitochondrial biogenesis in muscle cells. The protein is CREB-regulated transcription coactivator 3 (crtc3) of Xenopus tropicalis (Western clawed frog).